The sequence spans 489 residues: MESTFSSPAEAALQREAGSAGLRTSLGDLDRVYELERVVGFVRDLGCQRVALQFPDQLLGDAGAVAALLEEATGSKMFILGDTAYGSCCVDVLGAEQAGAQALVHFGPACLSPPARPLPVAFVLGQRSVALELCAKAFEAQNPDPTAPVVLLSEPSCAHALEALATLLRPRYLDLLVSSPALPLPAGSFNPNPEPLERFGRRFPLAPGRCLEEYGAFYVGGSEAISDPDLDPDLSRLLLGWAPGRPFSSCCPDTGRTQDEGVRAGRLRARRRYLIERARDARVVGLLAGTLGVARHREALAHLRNLTQAAGKRSYVLALGRPTPAKLANFPEVDVFVLLACPLGTLAPQPSGSFFRPVLAPCELEAACNPAWPPPGLAPHLTHYTDLLPGSPFHVPLPPPDSELWDAPDVSLITGDLRPPPVWKPSDDPGCSALTPKPQLELAESSPAASFLSSRSWKGLQPSLGQTPVTGAVSGRRGIAIAYEDEGNS.

At M1 the chain carries N-acetylmethionine. The residue at position 7 (S7) is a Phosphoserine. 3 residues coordinate [4Fe-4S] cluster: C89, C110, and C341. T435 is subject to Phosphothreonine. Phosphoserine occurs at positions 446 and 456. T467 carries the post-translational modification Phosphothreonine.

This sequence belongs to the DPH1/DPH2 family. DPH2 subfamily. In terms of assembly, component of the 2-(3-amino-3-carboxypropyl)histidine synthase complex composed of DPH1, DPH2, DPH3 and a NADH-dependent reductase. Interacts with DPH1. [4Fe-4S] cluster is required as a cofactor.

It participates in protein modification; peptidyl-diphthamide biosynthesis. Functionally, required for the first step of diphthamide biosynthesis, a post-translational modification of histidine which occurs in elongation factor 2. DPH1 and DPH2 transfer a 3-amino-3-carboxypropyl (ACP) group from S-adenosyl-L-methionine (SAM) to a histidine residue, the reaction is assisted by a reduction system comprising DPH3 and a NADH-dependent reductase. Facilitates the reduction of the catalytic iron-sulfur cluster found in the DPH1 subunit. The sequence is that of 2-(3-amino-3-carboxypropyl)histidine synthase subunit 2 (DPH2) from Bos taurus (Bovine).